The following is an 88-amino-acid chain: MASGWANDDAVNEQINSTIEDAIARARGEIPRGESLDECEECGAPIPQARREAIPGVRLCIHCQQEKDLQKPAYTGYNRRGSKDSQLR.

A dksA C4-type zinc finger spans residues 39–63 (CEECGAPIPQARREAIPGVRLCIHC).

This is an uncharacterized protein from Escherichia coli (strain K12).